Here is a 98-residue protein sequence, read N- to C-terminus: NADH-ubiquinone oxidoreductase chain 4L (98 aa).

Transmembrane regions (helical) follow at residues 1–21 (MSIV…GTLL), 29–49 (SLMC…LISL), and 59–79 (VPLI…ALLV).

The protein belongs to the complex I subunit 4L family. As to quaternary structure, core subunit of respiratory chain NADH dehydrogenase (Complex I) which is composed of 45 different subunits.

The protein localises to the mitochondrion inner membrane. The catalysed reaction is a ubiquinone + NADH + 5 H(+)(in) = a ubiquinol + NAD(+) + 4 H(+)(out). Functionally, core subunit of the mitochondrial membrane respiratory chain NADH dehydrogenase (Complex I) which catalyzes electron transfer from NADH through the respiratory chain, using ubiquinone as an electron acceptor. Part of the enzyme membrane arm which is embedded in the lipid bilayer and involved in proton translocation. This is NADH-ubiquinone oxidoreductase chain 4L (MT-ND4L) from Hemiechinus auritus (Long-eared hedgehog).